The following is a 321-amino-acid chain: Solute carrier family 25 member 33 (321 aa).

Solcar repeat units lie at residues 9–118 (ENTL…AKEQ), 126–213 (NSNI…LKKY), and 231–315 (TSFF…IVYL). Transmembrane regions (helical) follow at residues 12 to 32 (LLHL…TCPL), 49 to 65 (VYYP…AGMV), 121 to 141 (GIFV…AAFI), 190 to 210 (LTAS…YESL), 233 to 253 (FFGL…IAYP), and 298 to 318 (QIPN…LLED).

The protein belongs to the mitochondrial carrier (TC 2.A.29) family. In terms of tissue distribution, expressed in the central nervous system. Also expressed in testis and skeletal muscle. Weakly expressed in heart, liver, kidney, prostate, colon and peripheral blood leukocytes.

Its subcellular location is the mitochondrion inner membrane. It carries out the reaction UTP(in) + UDP(out) = UTP(out) + UDP(in). The enzyme catalyses dUTP(out) + UTP(in) = dUTP(in) + UTP(out). It catalyses the reaction 5-methyl-UTP(out) + UTP(in) = 5-methyl-UTP(in) + UTP(out). The catalysed reaction is 5-methyl-UDP(out) + UTP(in) = 5-methyl-UDP(in) + UTP(out). It carries out the reaction UTP(in) + CTP(out) = UTP(out) + CTP(in). The enzyme catalyses CDP(out) + UTP(in) = CDP(in) + UTP(out). It catalyses the reaction dCTP(out) + UTP(in) = dCTP(in) + UTP(out). The catalysed reaction is dCDP(out) + UTP(in) = dCDP(in) + UTP(out). It carries out the reaction UTP(in) + GTP(out) = UTP(out) + GTP(in). The enzyme catalyses UTP(in) + GDP(out) = UTP(out) + GDP(in). It catalyses the reaction dGTP(out) + UTP(in) = dGTP(in) + UTP(out). The catalysed reaction is dGDP(out) + UTP(in) = dGDP(in) + UTP(out). It carries out the reaction ITP(out) + UTP(in) = ITP(in) + UTP(out). Its activity is regulated as follows. Inhibited by pyridoxal 5'-phosphate, 4,7-diphenyl-1,10-phenanthroline, tannic acid, and mercurials (mercury dichloride, mersalyl acid, p-hydroxymercuribenzoate). Functionally, mitochondrial transporter that imports/exports pyrimidine nucleotides into and from mitochondria. Selectively transports uridine, thymidine, guanosine, cytosine and inosine (deoxy)nucleoside di- and triphosphates by an antiport mechanism. May import (deoxy)nucleoside triphosphates in exchange for intramitochondrial (deoxy)nucleoside diphosphates, thus providing precursors necessary for de novo synthesis of mitochondrial DNA and RNA while exporting products of their catabolism. Participates in mitochondrial genome maintenance, regulation of mitochondrial membrane potential and mitochondrial respiration. Upon INS or IGF1 stimulation regulates cell growth and proliferation by controlling mitochondrial DNA replication and transcription, the ratio of mitochondria-to nuclear-encoded components of the electron transport chain resulting in control of mitochondrial ROS production. Participates in dendritic cell endocytosis and may associate with mitochondrial oxidative phosphorylation. This Homo sapiens (Human) protein is Solute carrier family 25 member 33 (SLC25A33).